The primary structure comprises 375 residues: Myb family transcription factor PHL5 (375 aa).

The span at 159-171 (TSSQHQPKQSHPR) shows a compositional bias: polar residues. The tract at residues 159-178 (TSSQHQPKQSHPRFSSPPSF) is disordered. Positions 189 to 249 (CVNKTRIRWT…HLQKYRIAKY (61 aa)) constitute an HTH myb-type domain. Residues 220–245 (PKAILKRMDSDGLTIFHVKSHLQKYR) constitute a DNA-binding region (H-T-H motif). The stretch at 279-299 (KEALQLQLDVQRHLHEQLEIQ) forms a coiled coil. The short motif at 292 to 297 (LHEQLE) is the LHEQLE element.

This sequence belongs to the MYB-CC family.

Its subcellular location is the nucleus. The chain is Myb family transcription factor PHL5 from Arabidopsis thaliana (Mouse-ear cress).